The primary structure comprises 440 residues: Cytochrome b (440 aa).

Residues 46–66 (IWGIVLAFCLVLQIATGIVLV) traverse the membrane as a helical segment. Residues H97 and H111 each coordinate heme b. Transmembrane regions (helical) follow at residues 100–120 (GASLFFLAVYIHIFRGLYYGS), 129–149 (WIVGMLIYLMMMGTAFMGYVL), 156–176 (FWGATVITGLFGAIPGVGEAI), 194–214 (FFSLHYLLPFVIAALVVVHIW), 253–273 (LFALAVVLVVFFAIVGFMPNY), 296–315 (WYFLPFYAILRAFTADVWVV), 330–350 (FFGVIAMFGAILVMALVPWLD), 365–385 (WWFWLLAVDFVVLMWVGAMPA), and 394–414 (LAGSAYWFAYFLIILPLLGII). Residues H198 and H212 each contribute to the heme b site.

This sequence belongs to the cytochrome b family. In terms of assembly, the main subunits of complex b-c1 are: cytochrome b, cytochrome c1 and the Rieske protein. It depends on heme b as a cofactor.

The protein resides in the cell membrane. Component of the ubiquinol-cytochrome c reductase complex (complex III or cytochrome b-c1 complex), which is a respiratory chain that generates an electrochemical potential coupled to ATP synthesis. This chain is Cytochrome b (petB), found in Paracoccus denitrificans.